Consider the following 468-residue polypeptide: ATP synthase subunit beta (468 aa).

155–162 contributes to the ATP binding site; the sequence is GGAGVGKT.

The protein belongs to the ATPase alpha/beta chains family. As to quaternary structure, F-type ATPases have 2 components, CF(1) - the catalytic core - and CF(0) - the membrane proton channel. CF(1) has five subunits: alpha(3), beta(3), gamma(1), delta(1), epsilon(1). CF(0) has three main subunits: a(1), b(2) and c(9-12). The alpha and beta chains form an alternating ring which encloses part of the gamma chain. CF(1) is attached to CF(0) by a central stalk formed by the gamma and epsilon chains, while a peripheral stalk is formed by the delta and b chains.

It is found in the cell membrane. It catalyses the reaction ATP + H2O + 4 H(+)(in) = ADP + phosphate + 5 H(+)(out). Its function is as follows. Produces ATP from ADP in the presence of a proton gradient across the membrane. The catalytic sites are hosted primarily by the beta subunits. This Streptococcus pneumoniae (strain ATCC BAA-255 / R6) protein is ATP synthase subunit beta.